The sequence spans 284 residues: 4-diphosphocytidyl-2-C-methyl-D-erythritol kinase (284 aa).

Residue K14 is part of the active site. Residue 97–107 (PMGGGLGGGSS) coordinates ATP. D139 is a catalytic residue.

It belongs to the GHMP kinase family. IspE subfamily.

It carries out the reaction 4-CDP-2-C-methyl-D-erythritol + ATP = 4-CDP-2-C-methyl-D-erythritol 2-phosphate + ADP + H(+). Its pathway is isoprenoid biosynthesis; isopentenyl diphosphate biosynthesis via DXP pathway; isopentenyl diphosphate from 1-deoxy-D-xylulose 5-phosphate: step 3/6. Catalyzes the phosphorylation of the position 2 hydroxy group of 4-diphosphocytidyl-2C-methyl-D-erythritol. The protein is 4-diphosphocytidyl-2-C-methyl-D-erythritol kinase of Psychromonas ingrahamii (strain DSM 17664 / CCUG 51855 / 37).